We begin with the raw amino-acid sequence, 150 residues long: Large ribosomal subunit protein bL9 (150 aa).

This sequence belongs to the bacterial ribosomal protein bL9 family.

In terms of biological role, binds to the 23S rRNA. The polypeptide is Large ribosomal subunit protein bL9 (Erwinia tasmaniensis (strain DSM 17950 / CFBP 7177 / CIP 109463 / NCPPB 4357 / Et1/99)).